We begin with the raw amino-acid sequence, 353 residues long: Small ribosomal subunit biogenesis GTPase RsgA (353 aa).

A disordered region spans residues 1–24; the sequence is MSKNKLSKGQQRRVKANHQRRLKT. Over residues 10-23 the composition is skewed to basic residues; sequence QQRRVKANHQRRLK. In terms of domain architecture, CP-type G spans 104-274; it reads ASVLTRPDFY…VIDSPGVREF (171 aa). Residues 160–163 and 214–222 contribute to the GTP site; these read NKID and GQSGVGKSS. Residues cysteine 298, cysteine 303, histidine 305, and cysteine 311 each coordinate Zn(2+).

Belongs to the TRAFAC class YlqF/YawG GTPase family. RsgA subfamily. Monomer. Associates with 30S ribosomal subunit, binds 16S rRNA. The cofactor is Zn(2+).

The protein resides in the cytoplasm. Functionally, one of several proteins that assist in the late maturation steps of the functional core of the 30S ribosomal subunit. Helps release RbfA from mature subunits. May play a role in the assembly of ribosomal proteins into the subunit. Circularly permuted GTPase that catalyzes slow GTP hydrolysis, GTPase activity is stimulated by the 30S ribosomal subunit. This is Small ribosomal subunit biogenesis GTPase RsgA from Klebsiella pneumoniae subsp. pneumoniae (strain ATCC 700721 / MGH 78578).